A 78-amino-acid polypeptide reads, in one-letter code: MALIRKTFYFLFAMFFILVQLPSGCQAGLDFSQPFPSGEFAVCESCKLGRGKCRKECLENEKPDGNCRLNFLCCRQRI.

The first 27 residues, methionine 1–alanine 27, serve as a signal peptide directing secretion. 3 cysteine pairs are disulfide-bonded: cysteine 43-cysteine 74, cysteine 53-cysteine 67, and cysteine 57-cysteine 73.

Belongs to the beta-defensin family. In terms of tissue distribution, specifically expressed in testis.

The protein localises to the secreted. Its function is as follows. Has antibacterial activity. The sequence is that of Beta-defensin 105 (DEFB105A) from Homo sapiens (Human).